Reading from the N-terminus, the 525-residue chain is GMP synthase [glutamine-hydrolyzing] (525 aa).

Residues 16-205 enclose the Glutamine amidotransferase type-1 domain; that stretch reads PVLVVDFGAQ…LHDFAGLGAD (190 aa). The active-site Nucleophile is cysteine 93. Catalysis depends on residues histidine 179 and glutamate 181. The GMPS ATP-PPase domain maps to 206-399; sequence WTAANIAGVL…LGLPEEIVAR (194 aa). 233 to 239 is an ATP binding site; it reads SGGVDSA.

As to quaternary structure, homodimer.

The catalysed reaction is XMP + L-glutamine + ATP + H2O = GMP + L-glutamate + AMP + diphosphate + 2 H(+). Its pathway is purine metabolism; GMP biosynthesis; GMP from XMP (L-Gln route): step 1/1. Its function is as follows. Catalyzes the synthesis of GMP from XMP. The polypeptide is GMP synthase [glutamine-hydrolyzing] (Mycolicibacterium paratuberculosis (strain ATCC BAA-968 / K-10) (Mycobacterium paratuberculosis)).